A 398-amino-acid polypeptide reads, in one-letter code: Protochlorophyllide reductase, chloroplastic (398 aa).

This sequence belongs to the short-chain dehydrogenases/reductases (SDR) family. POR subfamily.

The protein resides in the plastid. It localises to the chloroplast. The enzyme catalyses chlorophyllide a + NADP(+) = protochlorophyllide a + NADPH + H(+). Its pathway is porphyrin-containing compound metabolism; chlorophyll biosynthesis. Functionally, phototransformation of protochlorophyllide (Pchlide) to chlorophyllide (Chlide). The protein is Protochlorophyllide reductase, chloroplastic (POR1) of Daucus carota (Wild carrot).